Reading from the N-terminus, the 140-residue chain is Nucleoside diphosphate kinase (140 aa).

ATP-binding residues include Lys-11, Phe-59, Arg-87, Thr-93, Arg-104, and Asn-114. Catalysis depends on His-117, which acts as the Pros-phosphohistidine intermediate.

It belongs to the NDK family. Homotetramer. Mg(2+) serves as cofactor.

Its subcellular location is the cytoplasm. It carries out the reaction a 2'-deoxyribonucleoside 5'-diphosphate + ATP = a 2'-deoxyribonucleoside 5'-triphosphate + ADP. The catalysed reaction is a ribonucleoside 5'-diphosphate + ATP = a ribonucleoside 5'-triphosphate + ADP. Its function is as follows. Major role in the synthesis of nucleoside triphosphates other than ATP. The ATP gamma phosphate is transferred to the NDP beta phosphate via a ping-pong mechanism, using a phosphorylated active-site intermediate. In Persephonella marina (strain DSM 14350 / EX-H1), this protein is Nucleoside diphosphate kinase.